The following is a 632-amino-acid chain: Chaperone protein HtpG (632 aa).

Positions 1–339 are a; substrate-binding; that stretch reads MTQQTMSFQA…SSDLPLNVSR (339 aa). The b stretch occupies residues 340-559; that stretch reads EILQESRDVK…DNDMSGYLQR (220 aa). A c region spans residues 560-632; sequence MLKAAGQSAP…TNALLLSRAA (73 aa).

The protein belongs to the heat shock protein 90 family. In terms of assembly, homodimer.

The protein resides in the cytoplasm. Its function is as follows. Molecular chaperone. Has ATPase activity. The polypeptide is Chaperone protein HtpG (Burkholderia pseudomallei (strain 668)).